The primary structure comprises 591 residues: V-type ATP synthase alpha chain (591 aa).

Glycine 232 to threonine 239 lines the ATP pocket.

Belongs to the ATPase alpha/beta chains family.

It catalyses the reaction ATP + H2O + 4 H(+)(in) = ADP + phosphate + 5 H(+)(out). In terms of biological role, produces ATP from ADP in the presence of a proton gradient across the membrane. The V-type alpha chain is a catalytic subunit. The protein is V-type ATP synthase alpha chain of Clostridium perfringens (strain SM101 / Type A).